Reading from the N-terminus, the 252-residue chain is Chitooligosaccharide deacetylase (252 aa).

Mg(2+) is bound by residues His61 and His125.

It belongs to the YdjC deacetylase family. ChbG subfamily. In terms of assembly, homodimer. The cofactor is Mg(2+).

It is found in the cytoplasm. It catalyses the reaction N,N'-diacetylchitobiose + H2O = N-acetyl-beta-D-glucosaminyl-(1-&gt;4)-D-glucosamine + acetate. It carries out the reaction diacetylchitobiose-6'-phosphate + H2O = N'-monoacetylchitobiose-6'-phosphate + acetate. It functions in the pathway glycan degradation; chitin degradation. In terms of biological role, involved in the degradation of chitin. ChbG is essential for growth on the acetylated chitooligosaccharides chitobiose and chitotriose but is dispensable for growth on cellobiose and chitosan dimer, the deacetylated form of chitobiose. Deacetylation of chitobiose-6-P and chitotriose-6-P is necessary for both the activation of the chb promoter by the regulatory protein ChbR and the hydrolysis of phosphorylated beta-glucosides by the phospho-beta-glucosidase ChbF. Catalyzes the removal of only one acetyl group from chitobiose-6-P to yield monoacetylchitobiose-6-P, the inducer of ChbR and the substrate of ChbF. The sequence is that of Chitooligosaccharide deacetylase from Klebsiella pneumoniae subsp. pneumoniae (strain ATCC 700721 / MGH 78578).